We begin with the raw amino-acid sequence, 338 residues long: Cytoskeleton protein RodZ (338 aa).

The Cytoplasmic portion of the chain corresponds to 1–111 (MNTEATHEEN…LGKSRKKRDG (111 aa)). Residues 19 to 71 (LRLAREQLGLSQQVVAERLCLKVSTVRDIEEDKAPADLASTFLRGYIRSYARL) enclose the HTH cro/C1-type domain. Positions 30–49 (QQVVAERLCLKVSTVRDIEE) form a DNA-binding region, H-T-H motif. A helical; Signal-anchor for type II membrane protein membrane pass occupies residues 112–132 (WLMSFTWLVLFVVVGLTGAWW). The Periplasmic portion of the chain corresponds to 133-338 (WQNHKAQQEE…TLNAEQSVTQ (206 aa)). 2 stretches are compositionally biased toward polar residues: residues 147–180 (ADQS…QDQA) and 189–214 (GDTQ…SQQP). The disordered stretch occupies residues 147–245 (ADQSSAELSQ…AQSQLPVGQA (99 aa)). Over residues 220-239 (SQANTDTAAQQNTTQPAQSQ) the composition is skewed to low complexity.

This sequence belongs to the RodZ family.

Its subcellular location is the cell inner membrane. In terms of biological role, cytoskeletal protein that is involved in cell-shape control through regulation of the length of the long axis. In Cronobacter sakazakii (strain ATCC BAA-894) (Enterobacter sakazakii), this protein is Cytoskeleton protein RodZ.